Here is a 562-residue protein sequence, read N- to C-terminus: Probable E3 ubiquitin-protein ligase ARI7 (562 aa).

The tract at residues Met-1–Gly-39 is disordered. The segment covering Asp-27–Gly-39 has biased composition (acidic residues). The tract at residues Ser-133 to Glu-346 is TRIAD supradomain. The Zn(2+) site is built by Cys-137, Cys-140, Cys-154, His-156, Cys-159, Cys-162, Cys-182, Cys-187, Cys-226, Cys-231, Cys-248, Cys-250, Cys-255, Cys-258, His-263, Cys-268, Cys-295, and Cys-298. The RING-type 1 zinc finger occupies Cys-137–Cys-187. The IBR-type zinc finger occupies Glu-206 to Cys-268. The segment at Cys-295–Cys-325 adopts an RING-type 2; atypical zinc-finger fold. Residue Cys-308 is part of the active site. Zn(2+) contacts are provided by Cys-313, Cys-317, Cys-322, Cys-325, His-332, and Cys-342. The tract at residues Ala-524–Leu-562 is disordered. Low complexity predominate over residues Cys-525–Lys-540.

This sequence belongs to the RBR family. Ariadne subfamily. Zn(2+) is required as a cofactor. As to expression, ubiquitous.

The catalysed reaction is [E2 ubiquitin-conjugating enzyme]-S-ubiquitinyl-L-cysteine + [acceptor protein]-L-lysine = [E2 ubiquitin-conjugating enzyme]-L-cysteine + [acceptor protein]-N(6)-ubiquitinyl-L-lysine.. It functions in the pathway protein modification; protein ubiquitination. Might act as an E3 ubiquitin-protein ligase, or as part of E3 complex, which accepts ubiquitin from specific E2 ubiquitin-conjugating enzymes and then transfers it to substrates. In Arabidopsis thaliana (Mouse-ear cress), this protein is Probable E3 ubiquitin-protein ligase ARI7 (ARI7).